The chain runs to 215 residues: HTH-type transcriptional regulator AcrR (215 aa).

In terms of domain architecture, HTH tetR-type spans 10-70 (QETRQHILDV…EIWELSESNI (61 aa)). The segment at residues 33–52 (SLGEIAKAAGVTRGAIYWHF) is a DNA-binding region (H-T-H motif).

Potential regulator protein for the acrAB genes. This chain is HTH-type transcriptional regulator AcrR (acrR), found in Shigella flexneri.